A 177-amino-acid polypeptide reads, in one-letter code: ATP-dependent protease subunit HslV (177 aa).

Residue Thr-6 is part of the active site. Residues Gly-161, Cys-164, and Thr-167 each contribute to the Na(+) site.

This sequence belongs to the peptidase T1B family. HslV subfamily. In terms of assembly, a double ring-shaped homohexamer of HslV is capped on each side by a ring-shaped HslU homohexamer. The assembly of the HslU/HslV complex is dependent on binding of ATP.

The protein localises to the cytoplasm. It carries out the reaction ATP-dependent cleavage of peptide bonds with broad specificity.. Its activity is regulated as follows. Allosterically activated by HslU binding. Protease subunit of a proteasome-like degradation complex believed to be a general protein degrading machinery. This chain is ATP-dependent protease subunit HslV, found in Petrotoga mobilis (strain DSM 10674 / SJ95).